We begin with the raw amino-acid sequence, 337 residues long: Ornithine carbamoyltransferase (337 aa).

Residues 57 to 60 (STRT), Gln-84, Arg-108, and 135 to 138 (HPTQ) each bind carbamoyl phosphate. L-ornithine-binding positions include Asn-167, Asp-231, and 235-236 (SM). Residues 272-273 (CL) and Arg-317 contribute to the carbamoyl phosphate site.

It belongs to the aspartate/ornithine carbamoyltransferase superfamily. OTCase family.

It localises to the cytoplasm. The enzyme catalyses carbamoyl phosphate + L-ornithine = L-citrulline + phosphate + H(+). It participates in amino-acid degradation; L-arginine degradation via ADI pathway; carbamoyl phosphate from L-arginine: step 2/2. In terms of biological role, reversibly catalyzes the transfer of the carbamoyl group from carbamoyl phosphate (CP) to the N(epsilon) atom of ornithine (ORN) to produce L-citrulline. In Streptococcus equi subsp. zooepidemicus (strain MGCS10565), this protein is Ornithine carbamoyltransferase.